Consider the following 249-residue polypeptide: Ubiquinone/menaquinone biosynthesis C-methyltransferase UbiE (249 aa).

Residues threonine 74, aspartate 93, and 121-122 contribute to the S-adenosyl-L-methionine site; that span reads DA.

It belongs to the class I-like SAM-binding methyltransferase superfamily. MenG/UbiE family.

The enzyme catalyses a 2-demethylmenaquinol + S-adenosyl-L-methionine = a menaquinol + S-adenosyl-L-homocysteine + H(+). The catalysed reaction is a 2-methoxy-6-(all-trans-polyprenyl)benzene-1,4-diol + S-adenosyl-L-methionine = a 5-methoxy-2-methyl-3-(all-trans-polyprenyl)benzene-1,4-diol + S-adenosyl-L-homocysteine + H(+). The protein operates within quinol/quinone metabolism; menaquinone biosynthesis; menaquinol from 1,4-dihydroxy-2-naphthoate: step 2/2. Its pathway is cofactor biosynthesis; ubiquinone biosynthesis. Methyltransferase required for the conversion of demethylmenaquinol (DMKH2) to menaquinol (MKH2) and the conversion of 2-polyprenyl-6-methoxy-1,4-benzoquinol (DDMQH2) to 2-polyprenyl-3-methyl-6-methoxy-1,4-benzoquinol (DMQH2). The sequence is that of Ubiquinone/menaquinone biosynthesis C-methyltransferase UbiE from Acidiphilium cryptum (strain JF-5).